We begin with the raw amino-acid sequence, 72 residues long: Exodeoxyribonuclease 7 small subunit (72 aa).

Belongs to the XseB family. In terms of assembly, heterooligomer composed of large and small subunits.

The protein resides in the cytoplasm. It catalyses the reaction Exonucleolytic cleavage in either 5'- to 3'- or 3'- to 5'-direction to yield nucleoside 5'-phosphates.. In terms of biological role, bidirectionally degrades single-stranded DNA into large acid-insoluble oligonucleotides, which are then degraded further into small acid-soluble oligonucleotides. The protein is Exodeoxyribonuclease 7 small subunit of Chlamydia muridarum (strain MoPn / Nigg).